The following is a 248-amino-acid chain: Tyrosine recombinase XerD-like (248 aa).

Residues 1 to 72 (MKSYIEPFIA…TANQFLYYLY (72 aa)) form the Core-binding (CB) domain. In terms of domain architecture, Tyr recombinase spans 85-248 (DTMKVMRTEK…PVTLEKYYKS (164 aa)). Active-site residues include K149 and R213. Y245 serves as the catalytic O-(3'-phospho-DNA)-tyrosine intermediate.

It belongs to the 'phage' integrase family. XerD-like subfamily.

Its subcellular location is the cytoplasm. Putative tyrosine recombinase. Not involved in the cutting and rejoining of the recombining DNA molecules on dif(SL) site. The sequence is that of Tyrosine recombinase XerD-like from Streptococcus pyogenes serotype M4 (strain MGAS10750).